The following is a 52-amino-acid chain: Large ribosomal subunit protein bL32c (52 aa).

It belongs to the bacterial ribosomal protein bL32 family.

The protein localises to the plastid. It is found in the chloroplast. This Citrus sinensis (Sweet orange) protein is Large ribosomal subunit protein bL32c.